The primary structure comprises 232 residues: 2,3-bisphosphoglycerate-dependent phosphoglycerate mutase (232 aa).

Substrate-binding positions include 10–17 (RHGESIWN), 23–24 (TG), arginine 62, 89–92 (ERHY), lysine 100, 116–117 (RR), and 185–186 (GN). Residue histidine 11 is the Tele-phosphohistidine intermediate of the active site. The active-site Proton donor/acceptor is the glutamate 89.

Belongs to the phosphoglycerate mutase family. BPG-dependent PGAM subfamily. As to quaternary structure, homodimer.

It catalyses the reaction (2R)-2-phosphoglycerate = (2R)-3-phosphoglycerate. It functions in the pathway carbohydrate degradation; glycolysis; pyruvate from D-glyceraldehyde 3-phosphate: step 3/5. In terms of biological role, catalyzes the interconversion of 2-phosphoglycerate and 3-phosphoglycerate. This is 2,3-bisphosphoglycerate-dependent phosphoglycerate mutase from Buchnera aphidicola subsp. Baizongia pistaciae (strain Bp).